The primary structure comprises 736 residues: Phosphoribosylformylglycinamidine synthase subunit PurL (736 aa).

Residue H49 is part of the active site. ATP is bound by residues Y52 and K91. E93 contacts Mg(2+). Substrate-binding positions include 94 to 97 and R116; that span reads SHNH. H95 acts as the Proton acceptor in catalysis. Mg(2+) is bound at residue D117. Q240 contacts substrate. D268 is a binding site for Mg(2+). Substrate is bound at residue 312 to 314; the sequence is ESQ. ATP-binding residues include D493 and G530. N531 contributes to the Mg(2+) binding site. S533 lines the substrate pocket.

This sequence belongs to the FGAMS family. Monomer. Part of the FGAM synthase complex composed of 1 PurL, 1 PurQ and 2 PurS subunits.

The protein localises to the cytoplasm. It catalyses the reaction N(2)-formyl-N(1)-(5-phospho-beta-D-ribosyl)glycinamide + L-glutamine + ATP + H2O = 2-formamido-N(1)-(5-O-phospho-beta-D-ribosyl)acetamidine + L-glutamate + ADP + phosphate + H(+). The protein operates within purine metabolism; IMP biosynthesis via de novo pathway; 5-amino-1-(5-phospho-D-ribosyl)imidazole from N(2)-formyl-N(1)-(5-phospho-D-ribosyl)glycinamide: step 1/2. Its function is as follows. Part of the phosphoribosylformylglycinamidine synthase complex involved in the purines biosynthetic pathway. Catalyzes the ATP-dependent conversion of formylglycinamide ribonucleotide (FGAR) and glutamine to yield formylglycinamidine ribonucleotide (FGAM) and glutamate. The FGAM synthase complex is composed of three subunits. PurQ produces an ammonia molecule by converting glutamine to glutamate. PurL transfers the ammonia molecule to FGAR to form FGAM in an ATP-dependent manner. PurS interacts with PurQ and PurL and is thought to assist in the transfer of the ammonia molecule from PurQ to PurL. The chain is Phosphoribosylformylglycinamidine synthase subunit PurL from Rhodopseudomonas palustris (strain TIE-1).